The primary structure comprises 366 residues: Growth hormone secretagogue receptor type 1 (366 aa).

Topologically, residues M1–A40 are extracellular. 2 N-linked (GlcNAc...) asparagine glycosylation sites follow: N13 and N27. Residues P41–L66 form a helical membrane-spanning segment. The Cytoplasmic portion of the chain corresponds to V67–R72. The chain crosses the membrane as a helical span at residues E73–M96. The Extracellular segment spans residues P97–K117. C116 and C198 form a disulfide bridge. Residues L118–V139 traverse the membrane as a helical segment. Residues E140–L162 lie on the Cytoplasmic side of the membrane. A helical membrane pass occupies residues V163–G183. The Extracellular portion of the chain corresponds to V184–T211. N-linked (GlcNAc...) asparagine glycosylation is present at N188. A helical transmembrane segment spans residues I212–I235. The Cytoplasmic portion of the chain corresponds to G236–K263. A helical transmembrane segment spans residues M264–L285. The Extracellular segment spans residues F286 to Q302. The chain crosses the membrane as a helical span at residues Y303–M326. Residues S327–T366 are Cytoplasmic-facing.

This sequence belongs to the G-protein coupled receptor 1 family.

The protein localises to the cell membrane. Functionally, receptor for ghrelin, coupled to G-alpha-11 proteins. Stimulates growth hormone secretion. Also binds other growth hormone releasing peptides (GHRP) (e.g. Met-enkephalin and GHRP-6) as well as non-peptide, low molecular weight secretagogues (e.g. L-692,429, MK-0677, adenosine). The protein is Growth hormone secretagogue receptor type 1 (GHSR) of Oryctolagus cuniculus (Rabbit).